A 208-amino-acid chain; its full sequence is Large ribosomal subunit protein uL3 (208 aa).

Residues 117–149 are disordered; the sequence is FQGVIKRHGQSRGPMAHGSRYHRRPGSMGPVSP.

Belongs to the universal ribosomal protein uL3 family. As to quaternary structure, part of the 50S ribosomal subunit. Forms a cluster with proteins L14 and L19.

Functionally, one of the primary rRNA binding proteins, it binds directly near the 3'-end of the 23S rRNA, where it nucleates assembly of the 50S subunit. The polypeptide is Large ribosomal subunit protein uL3 (Streptococcus equi subsp. equi (strain 4047)).